The sequence spans 716 residues: 1,4-alpha-glucan branching enzyme GlgB (716 aa).

The Nucleophile role is filled by Asp399. Catalysis depends on Glu452, which acts as the Proton donor.

This sequence belongs to the glycosyl hydrolase 13 family. GlgB subfamily. In terms of assembly, monomer.

The enzyme catalyses Transfers a segment of a (1-&gt;4)-alpha-D-glucan chain to a primary hydroxy group in a similar glucan chain.. It functions in the pathway glycan biosynthesis; glycogen biosynthesis. Its function is as follows. Catalyzes the formation of the alpha-1,6-glucosidic linkages in glycogen by scission of a 1,4-alpha-linked oligosaccharide from growing alpha-1,4-glucan chains and the subsequent attachment of the oligosaccharide to the alpha-1,6 position. The chain is 1,4-alpha-glucan branching enzyme GlgB from Rhodopseudomonas palustris (strain BisB5).